We begin with the raw amino-acid sequence, 171 residues long: L-methionine sulfoximine/L-methionine sulfone acetyltransferase (171 aa).

Residues 1 to 163 (MTIRFADKAD…DLTFMQLQLD (163 aa)) enclose the N-acetyltransferase domain. Substrate contacts are provided by residues 72–74 (RSF) and 82–84 (EHS). Acetyl-CoA is bound by residues 85-87 (VYV), 93-98 (GKGLGR), Asn124, and Ser133.

Homodimer.

It catalyses the reaction L-methionine sulfoximine + acetyl-CoA = N-acetyl-L-methionine sulfoximine + CoA + H(+). It carries out the reaction L-methionine sulfone + acetyl-CoA = N-acetyl-L-methionine sulfone + CoA + H(+). In terms of biological role, plays a role in the resistance against the toxic effects of L-methionine sulfoximine (MSX), a rare amino acid which inhibits glutamine synthetase (GlnA). Catalyzes the acetylation of MSX. It can also use L-methionine sulfone (MSO). Also catalyzes the acylation of free L-amino acids using an acyl-CoA as acyl donor. This is L-methionine sulfoximine/L-methionine sulfone acetyltransferase (yncA) from Salmonella typhimurium (strain LT2 / SGSC1412 / ATCC 700720).